A 279-amino-acid chain; its full sequence is Type III pantothenate kinase (279 aa).

6 to 13 contacts ATP; the sequence is DIGNTLSK. Substrate contacts are provided by residues Tyr92 and 99 to 102; that span reads GVDR. Asp101 acts as the Proton acceptor in catalysis. Asp120 contributes to the K(+) binding site. Ser123 contributes to the ATP binding site. A substrate-binding site is contributed by Thr177.

The protein belongs to the type III pantothenate kinase family. Homodimer. The cofactor is NH4(+). It depends on K(+) as a cofactor.

The protein localises to the cytoplasm. It catalyses the reaction (R)-pantothenate + ATP = (R)-4'-phosphopantothenate + ADP + H(+). The protein operates within cofactor biosynthesis; coenzyme A biosynthesis; CoA from (R)-pantothenate: step 1/5. Functionally, catalyzes the phosphorylation of pantothenate (Pan), the first step in CoA biosynthesis. This chain is Type III pantothenate kinase, found in Chromohalobacter salexigens (strain ATCC BAA-138 / DSM 3043 / CIP 106854 / NCIMB 13768 / 1H11).